A 465-amino-acid chain; its full sequence is Argininosuccinate lyase (465 aa).

Belongs to the lyase 1 family. Argininosuccinate lyase subfamily.

It localises to the cytoplasm. It carries out the reaction 2-(N(omega)-L-arginino)succinate = fumarate + L-arginine. Its pathway is amino-acid biosynthesis; L-arginine biosynthesis; L-arginine from L-ornithine and carbamoyl phosphate: step 3/3. The sequence is that of Argininosuccinate lyase from Aromatoleum aromaticum (strain DSM 19018 / LMG 30748 / EbN1) (Azoarcus sp. (strain EbN1)).